A 475-amino-acid chain; its full sequence is Ribosomal protein uS12 methylthiotransferase RimO (475 aa).

The MTTase N-terminal domain maps to 5–114 (RTVRLIRLGC…IAQRLEDVLA (110 aa)). 6 residues coordinate [4Fe-4S] cluster: cysteine 14, cysteine 49, cysteine 78, cysteine 174, cysteine 178, and cysteine 181. In terms of domain architecture, Radical SAM core spans 160-390 (LDDSPVAPLK…AGIAEEVTAD (231 aa)). Residues 393-461 (RARLGETVDV…GVDFLAAPVT (69 aa)) form the TRAM domain.

The protein belongs to the methylthiotransferase family. RimO subfamily. Requires [4Fe-4S] cluster as cofactor.

The protein localises to the cytoplasm. It carries out the reaction L-aspartate(89)-[ribosomal protein uS12]-hydrogen + (sulfur carrier)-SH + AH2 + 2 S-adenosyl-L-methionine = 3-methylsulfanyl-L-aspartate(89)-[ribosomal protein uS12]-hydrogen + (sulfur carrier)-H + 5'-deoxyadenosine + L-methionine + A + S-adenosyl-L-homocysteine + 2 H(+). In terms of biological role, catalyzes the methylthiolation of an aspartic acid residue of ribosomal protein uS12. The sequence is that of Ribosomal protein uS12 methylthiotransferase RimO from Acidothermus cellulolyticus (strain ATCC 43068 / DSM 8971 / 11B).